A 397-amino-acid chain; its full sequence is Guanine nucleotide-binding protein G(s) subunit alpha (397 aa).

The disordered stretch occupies residues 1-23; that stretch reads MGCLGNSKTEDQRNEEKAQREAN. A lipid anchor (N-palmitoyl glycine) is attached at glycine 2. Residue cysteine 3 is the site of S-palmitoyl cysteine attachment. Over residues 8-23 the composition is skewed to basic and acidic residues; sequence KTEDQRNEEKAQREAN. Residues 39–397 form the G-alpha domain; the sequence is ATHRLLLLGA…RMHLRQYELL (359 aa). Residues 42–55 form a G1 motif region; it reads RLLLLGAGESGKST. Residues 47-55, 182-189, 208-212, 277-280, and alanine 369 each bind GTP; these read GAGESGKST, LLRCRVLT, DVGGQ, and NKQD. Residues serine 54 and threonine 189 each coordinate Mg(2+). The interval 181 to 189 is G2 motif; sequence DLLRCRVLT. The segment at 204 to 213 is G3 motif; it reads FHMFDVGGQR. Residues 273 to 280 are G4 motif; it reads ILFLNKQD. Residues 367–372 form a G5 motif region; sequence TCAVDT.

Belongs to the G-alpha family. G(s) subfamily. Heterotrimeric G proteins are composed of 3 units; alpha, beta and gamma. The alpha chain contains the guanine nucleotide binding site. Interacts with CRY1; the interaction may block GPCR-mediated regulation of cAMP concentrations. Interacts with ADCY6 and stimulates its adenylyl cyclase activity. Interacts with ADCY2 and ADCY5. Stimulates the ADCY5 adenylyl cyclase activity. Interaction with SASH1.

The protein resides in the cell membrane. In terms of biological role, guanine nucleotide-binding proteins (G proteins) function as transducers in numerous signaling pathways controlled by G protein-coupled receptors (GPCRs). Signaling involves the activation of adenylyl cyclases, resulting in increased levels of the signaling molecule cAMP. GNAS functions downstream of several GPCRs, including beta-adrenergic receptors. Stimulates the Ras signaling pathway via RAPGEF2. This is Guanine nucleotide-binding protein G(s) subunit alpha (GNAS) from Sus scrofa (Pig).